The sequence spans 20 residues: Serum amyloid P-component (20 aa).

The region spanning 1–20 is the Pentraxin (PTX) domain; that stretch reads ZPIDLMGKVFVFDKELSPBI.

The protein belongs to the pentraxin family. As to quaternary structure, homopentamer. Pentraxin (or pentaxin) have a discoid arrangement of 5 non-covalently bound subunits.

It localises to the secreted. The sequence is that of Serum amyloid P-component from Pleuronectes platessa (European plaice).